Consider the following 219-residue polypeptide: MNLDFSATIPQIPFILEGLAITLKIVVVSAIIGLILGIVLSLCKISTFRPFIWIADFYTSVFRGTPLVLQLMIVYFGLPQLLGFQIDQFWAAVVALSLNSAAYVSEIIRAGINAIDKGQKEAAVALGVPYGKMMKDLLLPQAFKNISPAIVNELITLTKESAIVTVIGLGDVMRRAYQAGAATYNYLEPLIIAGLIYYVLVLILTFIGKAVERKLKSND.

A run of 5 helical transmembrane segments spans residues 19-39 (LAITLKIVVVSAIIGLILGIV), 51-73 (FIWIADFYTSVFRGTPLVLQLMI), 88-108 (QFWAAVVALSLNSAAYVSEII), 149-169 (AIVNELITLTKESAIVTVIGL), and 187-207 (LEPLIIAGLIYYVLVLILTFI). Residues 19-208 (LAITLKIVVV…VLVLILTFIG (190 aa)) enclose the ABC transmembrane type-1 domain.

The protein belongs to the binding-protein-dependent transport system permease family. HisMQ subfamily.

Its subcellular location is the cell membrane. Functionally, part of a binding-protein-dependent transport system for arginine. Probably responsible for the translocation of the substrate across the membrane. The polypeptide is Arginine transport system permease protein ArtQ (artQ) (Bacillus subtilis (strain 168)).